Here is a 1227-residue protein sequence, read N- to C-terminus: Peroxisomal ATPase PEX1 (1227 aa).

2 disordered regions span residues 251–311 and 443–480; these read NNKN…NKKN and PPTSSSSSSPSNNLDSQRSNNNNNNINNDQLNDITNNM. The segment covering 264–289 has biased composition (acidic residues); that stretch reads GDEEEDDDDNEEFDDDDDDDNNNNED. Coiled-coil stretches lie at residues 282-315 and 454-519; these read DDNNNNEDDTSKLQKQLDNKNNNNKKNKKNNKTI and NNLD…NQFQ. Positions 290–299 are enriched in basic and acidic residues; it reads DTSKLQKQLD. ATP contacts are provided by residues 609–616 and 907–914; these read GSHGSGKS and GPTGCGKT. Over residues 1096-1107 the composition is skewed to basic and acidic residues; that stretch reads KKRKRKEKEDQS. The tract at residues 1096–1132 is disordered; sequence KKRKRKEKEDQSNKNSSQQQDDFIIFQPKNNDNSISK. Over residues 1108–1117 the composition is skewed to low complexity; the sequence is NKNSSQQQDD. Residues 1123-1132 show a composition bias toward polar residues; it reads PKNNDNSISK.

It belongs to the AAA ATPase family. Interacts with PEX6; forming the PEX1-PEX6 AAA ATPase complex, which is composed of a heterohexamer formed by a trimer of PEX1-PEX6 dimers.

The protein resides in the cytoplasm. It localises to the cytosol. It is found in the peroxisome membrane. It carries out the reaction ATP + H2O = ADP + phosphate + H(+). In terms of biological role, component of the PEX1-PEX6 AAA ATPase complex, a protein dislocase complex that mediates the ATP-dependent extraction of the PEX5 receptor from peroxisomal membranes, an essential step for PEX5 recycling. Specifically recognizes PEX5 monoubiquitinated at 'Cys-11', and pulls it out of the peroxisome lumen through the PEX2-PEX10-PEX12 retrotranslocation channel. Extraction by the PEX1-PEX6 AAA ATPase complex is accompanied by unfolding of the TPR repeats and release of bound cargo from PEX5. The chain is Peroxisomal ATPase PEX1 (pex1) from Dictyostelium discoideum (Social amoeba).